Here is a 254-residue protein sequence, read N- to C-terminus: Imidazole glycerol phosphate synthase subunit HisF (254 aa).

Residues D12 and D131 contribute to the active site.

This sequence belongs to the HisA/HisF family. As to quaternary structure, heterodimer of HisH and HisF.

The protein localises to the cytoplasm. It catalyses the reaction 5-[(5-phospho-1-deoxy-D-ribulos-1-ylimino)methylamino]-1-(5-phospho-beta-D-ribosyl)imidazole-4-carboxamide + L-glutamine = D-erythro-1-(imidazol-4-yl)glycerol 3-phosphate + 5-amino-1-(5-phospho-beta-D-ribosyl)imidazole-4-carboxamide + L-glutamate + H(+). It functions in the pathway amino-acid biosynthesis; L-histidine biosynthesis; L-histidine from 5-phospho-alpha-D-ribose 1-diphosphate: step 5/9. Functionally, IGPS catalyzes the conversion of PRFAR and glutamine to IGP, AICAR and glutamate. The HisF subunit catalyzes the cyclization activity that produces IGP and AICAR from PRFAR using the ammonia provided by the HisH subunit. The chain is Imidazole glycerol phosphate synthase subunit HisF from Desulfitobacterium hafniense (strain Y51).